A 143-amino-acid chain; its full sequence is D-aminoacyl-tRNA deacylase (143 aa).

The Gly-cisPro motif, important for rejection of L-amino acids motif lies at 135-136 (GP).

It belongs to the DTD family. Homodimer.

The protein localises to the cytoplasm. The enzyme catalyses glycyl-tRNA(Ala) + H2O = tRNA(Ala) + glycine + H(+). The catalysed reaction is a D-aminoacyl-tRNA + H2O = a tRNA + a D-alpha-amino acid + H(+). Its function is as follows. An aminoacyl-tRNA editing enzyme that deacylates mischarged D-aminoacyl-tRNAs. Also deacylates mischarged glycyl-tRNA(Ala), protecting cells against glycine mischarging by AlaRS. Acts via tRNA-based rather than protein-based catalysis; rejects L-amino acids rather than detecting D-amino acids in the active site. By recycling D-aminoacyl-tRNA to D-amino acids and free tRNA molecules, this enzyme counteracts the toxicity associated with the formation of D-aminoacyl-tRNA entities in vivo and helps enforce protein L-homochirality. This is D-aminoacyl-tRNA deacylase from Mycobacterium avium (strain 104).